The following is a 240-amino-acid chain: Thiamine-phosphate synthase (240 aa).

Residues 63-67 (QYREK) and asparagine 94 contribute to the 4-amino-2-methyl-5-(diphosphooxymethyl)pyrimidine site. Residues aspartate 95 and aspartate 114 each contribute to the Mg(2+) site. Threonine 133 contributes to the 4-amino-2-methyl-5-(diphosphooxymethyl)pyrimidine binding site. 159-161 (TFT) contacts 2-[(2R,5Z)-2-carboxy-4-methylthiazol-5(2H)-ylidene]ethyl phosphate. Lysine 162 provides a ligand contact to 4-amino-2-methyl-5-(diphosphooxymethyl)pyrimidine. 2-[(2R,5Z)-2-carboxy-4-methylthiazol-5(2H)-ylidene]ethyl phosphate contacts are provided by residues glycine 190 and 210–211 (IS).

Belongs to the thiamine-phosphate synthase family. Requires Mg(2+) as cofactor.

It carries out the reaction 2-[(2R,5Z)-2-carboxy-4-methylthiazol-5(2H)-ylidene]ethyl phosphate + 4-amino-2-methyl-5-(diphosphooxymethyl)pyrimidine + 2 H(+) = thiamine phosphate + CO2 + diphosphate. It catalyses the reaction 2-(2-carboxy-4-methylthiazol-5-yl)ethyl phosphate + 4-amino-2-methyl-5-(diphosphooxymethyl)pyrimidine + 2 H(+) = thiamine phosphate + CO2 + diphosphate. The catalysed reaction is 4-methyl-5-(2-phosphooxyethyl)-thiazole + 4-amino-2-methyl-5-(diphosphooxymethyl)pyrimidine + H(+) = thiamine phosphate + diphosphate. The protein operates within cofactor biosynthesis; thiamine diphosphate biosynthesis; thiamine phosphate from 4-amino-2-methyl-5-diphosphomethylpyrimidine and 4-methyl-5-(2-phosphoethyl)-thiazole: step 1/1. Condenses 4-methyl-5-(beta-hydroxyethyl)thiazole monophosphate (THZ-P) and 2-methyl-4-amino-5-hydroxymethyl pyrimidine pyrophosphate (HMP-PP) to form thiamine monophosphate (TMP). The chain is Thiamine-phosphate synthase from Methanosarcina mazei (strain ATCC BAA-159 / DSM 3647 / Goe1 / Go1 / JCM 11833 / OCM 88) (Methanosarcina frisia).